A 330-amino-acid chain; its full sequence is GMP reductase (330 aa).

Catalysis depends on cysteine 180, which acts as the Thioimidate intermediate. Leucine 209–valine 232 contacts NADP(+).

The protein belongs to the IMPDH/GMPR family. GuaC type 2 subfamily.

The enzyme catalyses IMP + NH4(+) + NADP(+) = GMP + NADPH + 2 H(+). Functionally, catalyzes the irreversible NADPH-dependent deamination of GMP to IMP. It functions in the conversion of nucleobase, nucleoside and nucleotide derivatives of G to A nucleotides, and in maintaining the intracellular balance of A and G nucleotides. The polypeptide is GMP reductase (Lactobacillus acidophilus (strain ATCC 700396 / NCK56 / N2 / NCFM)).